A 644-amino-acid chain; its full sequence is Exoribonuclease 2 (644 aa).

Residues 189–516 (RQDLTALNFV…NHRLLKAVIK (328 aa)) enclose the RNB domain. The region spanning 561-643 (NTRFAAEIID…ETRSIIARPA (83 aa)) is the S1 motif domain.

The protein belongs to the RNR ribonuclease family. RNase II subfamily.

It is found in the cytoplasm. It catalyses the reaction Exonucleolytic cleavage in the 3'- to 5'-direction to yield nucleoside 5'-phosphates.. Its function is as follows. Involved in mRNA degradation. Hydrolyzes single-stranded polyribonucleotides processively in the 3' to 5' direction. The polypeptide is Exoribonuclease 2 (Salmonella choleraesuis (strain SC-B67)).